Reading from the N-terminus, the 648-residue chain is Threonine--tRNA ligase (648 aa).

The 61-residue stretch at 1–61 folds into the TGS domain; sequence MINITFPDGA…TEDGSIEIVT (61 aa). The interval 242–540 is catalytic; sequence DHRKLGKELD…LIENYKGAFP (299 aa). The Zn(2+) site is built by Cys336, His387, and His517.

The protein belongs to the class-II aminoacyl-tRNA synthetase family. Homodimer. The cofactor is Zn(2+).

Its subcellular location is the cytoplasm. The enzyme catalyses tRNA(Thr) + L-threonine + ATP = L-threonyl-tRNA(Thr) + AMP + diphosphate + H(+). In terms of biological role, catalyzes the attachment of threonine to tRNA(Thr) in a two-step reaction: L-threonine is first activated by ATP to form Thr-AMP and then transferred to the acceptor end of tRNA(Thr). Also edits incorrectly charged L-seryl-tRNA(Thr). The chain is Threonine--tRNA ligase from Streptococcus thermophilus (strain ATCC BAA-250 / LMG 18311).